We begin with the raw amino-acid sequence, 2158 residues long: Non-reducing polyketide synthase Preu8 (2158 aa).

Residues Leu4 to His241 are N-terminal acylcarrier protein transacylase domain (SAT). In terms of domain architecture, Ketosynthase family 3 (KS3) spans Asn369–Asp801. Catalysis depends on for beta-ketoacyl synthase activity residues Cys541, His676, and His719. The tract at residues Phe900–Ala1215 is malonyl-CoA:ACP transacylase (MAT) domain. Ser989 acts as the For acyl/malonyl transferase activity in catalysis. The tract at residues Ser1285–Pro1603 is product template (PT) domain. The N-terminal hotdog fold stretch occupies residues Gln1287–Gln1423. The PKS/mFAS DH domain occupies Gln1287–Asn1598. His1319 serves as the catalytic Proton acceptor; for dehydratase activity. Positions Ala1451 to Asn1598 are C-terminal hotdog fold. Asp1511 (proton donor; for dehydratase activity) is an active-site residue. Residues Lys1619 to Ser1639 are compositionally biased toward low complexity. A disordered region spans residues Lys1619–Thr1654. The Carrier 1 domain occupies Asp1651–Asp1725. The residue at position 1685 (Ser1685) is an O-(pantetheine 4'-phosphoryl)serine. The tract at residues Gln1723–Ser1779 is disordered. Over residues Asp1731–Asp1740 the composition is skewed to acidic residues. Residues Ser1743–Ser1770 show a composition bias toward polar residues. A Carrier 2 domain is found at Ser1779 to Pro1853. Ser1813 carries the O-(pantetheine 4'-phosphoryl)serine modification. Residues Asn1847–Gln1879 form a disordered region. A compositionally biased stretch (low complexity) spans Glu1860 to Lys1876. The thioesterase (TE) domain stretch occupies residues Ser1894 to His2144.

Pantetheine 4'-phosphate is required as a cofactor.

Non-reducing polyketide synthase; part of a gene cluster that mediates the biosynthesis of a yet unidentified natural product. The protein is Non-reducing polyketide synthase Preu8 of Preussia isomera (Coprophilous fungus).